We begin with the raw amino-acid sequence, 317 residues long: Ribosomal protein L11 methyltransferase (317 aa).

Thr-158, Gly-179, Asp-201, and Asn-244 together coordinate S-adenosyl-L-methionine.

This sequence belongs to the methyltransferase superfamily. PrmA family.

The protein resides in the cytoplasm. It carries out the reaction L-lysyl-[protein] + 3 S-adenosyl-L-methionine = N(6),N(6),N(6)-trimethyl-L-lysyl-[protein] + 3 S-adenosyl-L-homocysteine + 3 H(+). Methylates ribosomal protein L11. This is Ribosomal protein L11 methyltransferase from Streptococcus equi subsp. zooepidemicus (strain H70).